The following is an 87-amino-acid chain: Large ribosomal subunit protein bL27 (87 aa).

This sequence belongs to the bacterial ribosomal protein bL27 family.

This is Large ribosomal subunit protein bL27 from Phocaeicola vulgatus (strain ATCC 8482 / DSM 1447 / JCM 5826 / CCUG 4940 / NBRC 14291 / NCTC 11154) (Bacteroides vulgatus).